The primary structure comprises 385 residues: 1-deoxy-D-xylulose 5-phosphate reductoisomerase (385 aa).

Thr10, Gly11, Ser12, Ile13, Lys37, and Asn124 together coordinate NADPH. 1-deoxy-D-xylulose 5-phosphate is bound at residue Lys125. Glu126 contributes to the NADPH binding site. Asp150 is a binding site for Mn(2+). 1-deoxy-D-xylulose 5-phosphate is bound by residues Ser151, Glu152, Ser176, and His199. Residue Glu152 participates in Mn(2+) binding. Gly205 lines the NADPH pocket. Residues Ser212, Asn217, Lys218, and Glu221 each coordinate 1-deoxy-D-xylulose 5-phosphate. Glu221 contacts Mn(2+).

This sequence belongs to the DXR family. Mg(2+) serves as cofactor. The cofactor is Mn(2+).

It carries out the reaction 2-C-methyl-D-erythritol 4-phosphate + NADP(+) = 1-deoxy-D-xylulose 5-phosphate + NADPH + H(+). It functions in the pathway isoprenoid biosynthesis; isopentenyl diphosphate biosynthesis via DXP pathway; isopentenyl diphosphate from 1-deoxy-D-xylulose 5-phosphate: step 1/6. Catalyzes the NADPH-dependent rearrangement and reduction of 1-deoxy-D-xylulose-5-phosphate (DXP) to 2-C-methyl-D-erythritol 4-phosphate (MEP). The polypeptide is 1-deoxy-D-xylulose 5-phosphate reductoisomerase (Clostridium botulinum (strain 657 / Type Ba4)).